The following is a 151-amino-acid chain: Calmodulin-like protein 9 (151 aa).

4 EF-hand domains span residues 8-43, 44-79, 81-116, and 117-151; these read EQIQ…MGKN, PKAE…NTSQ, SASD…MGMK, and ITAE…AASY. 8 residues coordinate Ca(2+): Asp94, Asp96, Asp98, Glu105, Asp130, Asp132, Asp134, and Glu141.

It belongs to the calmodulin family. Interacts with IQD1. Interacts with ILK1. Binds to ABCG36. As to expression, expressed in leaves, flowers and siliques.

In terms of biological role, potential calcium sensor. The polypeptide is Calmodulin-like protein 9 (Arabidopsis thaliana (Mouse-ear cress)).